Reading from the N-terminus, the 491-residue chain is Ketol-acid reductoisomerase (NADP(+)) (491 aa).

The KARI N-terminal Rossmann domain maps to 15–208; that stretch reads AQLGKCRFMG…GGHRAGVLES (194 aa). Residues 45-48, arginine 68, arginine 76, serine 78, and 108-110 contribute to the NADP(+) site; these read CGAQ and DKQ. The active site involves histidine 132. NADP(+) is bound at residue glycine 158. KARI C-terminal knotted domains lie at 209–344 and 345–484; these read SFVA…TAPQ and YEGK…MTDM. Residues aspartate 217, glutamate 221, glutamate 389, and glutamate 393 each coordinate Mg(2+). Residue serine 414 coordinates substrate.

Belongs to the ketol-acid reductoisomerase family. Requires Mg(2+) as cofactor.

It carries out the reaction (2R)-2,3-dihydroxy-3-methylbutanoate + NADP(+) = (2S)-2-acetolactate + NADPH + H(+). The enzyme catalyses (2R,3R)-2,3-dihydroxy-3-methylpentanoate + NADP(+) = (S)-2-ethyl-2-hydroxy-3-oxobutanoate + NADPH + H(+). The protein operates within amino-acid biosynthesis; L-isoleucine biosynthesis; L-isoleucine from 2-oxobutanoate: step 2/4. It functions in the pathway amino-acid biosynthesis; L-valine biosynthesis; L-valine from pyruvate: step 2/4. Involved in the biosynthesis of branched-chain amino acids (BCAA). Catalyzes an alkyl-migration followed by a ketol-acid reduction of (S)-2-acetolactate (S2AL) to yield (R)-2,3-dihydroxy-isovalerate. In the isomerase reaction, S2AL is rearranged via a Mg-dependent methyl migration to produce 3-hydroxy-3-methyl-2-ketobutyrate (HMKB). In the reductase reaction, this 2-ketoacid undergoes a metal-dependent reduction by NADPH to yield (R)-2,3-dihydroxy-isovalerate. This chain is Ketol-acid reductoisomerase (NADP(+)), found in Shigella dysenteriae serotype 1 (strain Sd197).